Here is a 655-residue protein sequence, read N- to C-terminus: A-type voltage-gated potassium channel KCND3 (655 aa).

The Cytoplasmic portion of the chain corresponds to 1–182; it reads MAAGVAAWLP…FENPHTSTLA (182 aa). The segment at 6–21 is interaction with KCNIP1 and KCNIP2; it reads AAWLPFARAAAIGWMP. Residues 70–78 form an interaction with KCNIP1 region; it reads EKEFFFNED. Residues His104, Cys110, Cys131, and Cys132 each contribute to the Zn(2+) site. Ser153 carries the post-translational modification Phosphoserine. The helical transmembrane segment at 183 to 204 threads the bilayer; sequence LVFYYVTGFFIAVSVITNVVET. Residues 205–223 lie on the Extracellular side of the membrane; the sequence is VPCGTVPGSKELPCGERYS. A helical membrane pass occupies residues 224–246; the sequence is VAFFCLDTACVMIFTVEYLLRLF. Residues 247 to 253 lie on the Cytoplasmic side of the membrane; the sequence is AAPSRYR. Residues 254–277 traverse the membrane as a helical segment; that stretch reads FIRSVMSIIDVVAIMPYYIGLVMT. Over 278-283 the chain is Extracellular; it reads NNEDVS. The helical; Voltage-sensor transmembrane segment at 284 to 306 threads the bilayer; sequence GAFVTLRVFRVFRIFKFSRHSQG. Over 307–318 the chain is Cytoplasmic; the sequence is LRILGYTLKSCA. Residues 319-343 form a helical membrane-spanning segment; it reads SELGFLLFSLTMAIIIFATVMFYAE. The Extracellular segment spans residues 344-352; the sequence is KGSSASKFT. Positions 353–366 form an intramembrane region, helical; the sequence is SIPASFWYTIVTMT. K(+) is bound by residues Thr367, Leu368, Gly369, and Tyr370. A Selectivity filter motif is present at residues 367-372; it reads TLGYGD. The stretch at 367 to 374 is an intramembrane region; the sequence is TLGYGDMV. Residues 378 to 400 form a helical membrane-spanning segment; sequence IAGKIFGSICSLSGVLVIALPVP. Over 401–655 the chain is Cytoplasmic; it reads VIVSNFSRIY…ASNVVKVSVL (255 aa). Thr459 is subject to Phosphothreonine. An interaction with KCNIP1 and KCNIP2 region spans residues 470–487; it reads SLIESQHHHLLHCLEKTT. A mediates dendritic targeting region spans residues 472–487; sequence IESQHHHLLHCLEKTT. Phosphoserine; by CaMK2D is present on Ser569. Ser585 carries the post-translational modification Phosphoserine. Residues 618-644 form a disordered region; that stretch reads PAPPALTPEGETRPPPASPGPNTNIPS.

This sequence belongs to the potassium channel family. D (Shal) (TC 1.A.1.2) subfamily. Kv4.3/KCND3 sub-subfamily. In terms of assembly, homotetramer. Heterotetramer with KCND2. Associates with the regulatory subunits KCNIP3 and KCNIP4. Interacts with KCNE1, KCNE2, SCN1B and KCNAB1 and DLG1. Component of heteromultimeric potassium channels. Identified in potassium channel complexes containing KCND1, KCND2, KCND3, KCNIP1, KCNIP2, KCNIP3, KCNIP4, DPP6 and DPP10. Interacts with KCNIP1; each KCNIP1 monomer interacts with two adjacent KCND3 subunits, through both the N-terminal inactivation ball of a KCND3 subunit and a C-terminal helix from the adjacent KCND3 subunit, clamping them together; this interaction stabilizes the tetrameric form and modulates the channel gating kinetics namely channel activation and inactivation kinetics and rate of recovery from inactivation. Interacts with DPP6; this interaction modulates the channel gating kinetics namely channel activation and inactivation kinetics and rate of recovery from inactivation. Interacts with KCNIP2; each KCNIP2 monomer interacts with two adjacent KCND3 subunits, through both the N-terminal inactivation ball of a KCND3 subunit and a C-terminal helix from the adjacent KCND3 subunit, clamping them together; this interaction modulates the channel gating kinetics. Post-translationally, regulated through phosphorylation at Ser-569 by CaMK2D. In terms of tissue distribution, detected in carotid body chemoreceptor cells and in frontal cortex.

It is found in the cell membrane. The protein resides in the sarcolemma. Its subcellular location is the cell projection. The protein localises to the dendrite. The catalysed reaction is K(+)(in) = K(+)(out). Pore-forming (alpha) subunit of voltage-gated A-type potassium channels that mediates transmembrane potassium transport in excitable membranes, in brain and heart. In cardiomyocytes, may generate the transient outward potassium current I(To). In neurons, may conduct the transient subthreshold somatodendritic A-type potassium current (ISA). Kinetics properties are characterized by fast activation at subthreshold membrane potentials, rapid inactivation, and quick recovery from inactivation. Channel properties are modulated by interactions with regulatory subunits. Interaction with the regulatory subunits KCNIP1 or KCNIP2 modulates the channel gating kinetics namely channel activation and inactivation kinetics and rate of recovery from inactivation. Likewise, interaction with DPP6 modulates the channel gating kinetics namely channel activation and inactivation kinetics. The sequence is that of A-type voltage-gated potassium channel KCND3 from Oryctolagus cuniculus (Rabbit).